The following is a 682-amino-acid chain: Potassium-transporting ATPase ATP-binding subunit (682 aa).

4 consecutive transmembrane segments (helical) span residues 34–54, 58–78, 219–239, and 254–274; these read PVMFVVWAGSVLTTLLTLAMV, IAGSALFTGIISLWLWFTVLF, IALTILLIALTIVFLLATATL, and VLVALLVCLIPTTIGGLLSAI. D307 functions as the 4-aspartylphosphate intermediate in the catalytic mechanism. ATP is bound by residues D344, E348, 377 to 384, and K395; that span reads FTAQSRMS. Mg(2+) contacts are provided by D518 and D522. The next 3 membrane-spanning stretches (helical) occupy residues 588-608, 616-636, and 662-682; these read FAIIPAAFAATYPQLNALNVM, AILSAVIFNALIIIFLIPLAL, and LVVPFIGIKVIDVLLTLLGLA.

It belongs to the cation transport ATPase (P-type) (TC 3.A.3) family. Type IA subfamily. The system is composed of three essential subunits: KdpA, KdpB and KdpC.

Its subcellular location is the cell inner membrane. It catalyses the reaction K(+)(out) + ATP + H2O = K(+)(in) + ADP + phosphate + H(+). Its function is as follows. Part of the high-affinity ATP-driven potassium transport (or Kdp) system, which catalyzes the hydrolysis of ATP coupled with the electrogenic transport of potassium into the cytoplasm. This subunit is responsible for energy coupling to the transport system and for the release of the potassium ions to the cytoplasm. This is Potassium-transporting ATPase ATP-binding subunit from Salmonella agona (strain SL483).